We begin with the raw amino-acid sequence, 386 residues long: Bifunctional chorismate mutase/prephenate dehydratase (386 aa).

The region spanning 1-92 (MTSENPLLAL…DSVLTQQALL (92 aa)) is the Chorismate mutase domain. Substrate contacts are provided by arginine 11, arginine 28, lysine 39, aspartate 48, glutamate 52, serine 84, and glutamine 88. The 181-residue stretch at 105–285 (RIAFLGPKGS…NFTRFVVLAR (181 aa)) folds into the Prephenate dehydratase domain. In terms of domain architecture, ACT spans 299 to 376 (TLLMATGQQA…RSMKVLGCYP (78 aa)).

It localises to the cytoplasm. The enzyme catalyses chorismate = prephenate. It carries out the reaction prephenate + H(+) = 3-phenylpyruvate + CO2 + H2O. It functions in the pathway amino-acid biosynthesis; L-phenylalanine biosynthesis; phenylpyruvate from prephenate: step 1/1. It participates in metabolic intermediate biosynthesis; prephenate biosynthesis; prephenate from chorismate: step 1/1. In terms of biological role, catalyzes the Claisen rearrangement of chorismate to prephenate and the decarboxylation/dehydration of prephenate to phenylpyruvate. The polypeptide is Bifunctional chorismate mutase/prephenate dehydratase (pheA) (Escherichia coli O157:H7).